The chain runs to 311 residues: DNA-directed RNA polymerase subunit alpha (311 aa).

An alpha N-terminal domain (alpha-NTD) region spans residues 1 to 228 (MQYQIERIDH…ELFQPLATVT (228 aa)). An alpha C-terminal domain (alpha-CTD) region spans residues 239 to 311 (PSPEAQIPLE…ISIPQSRTSV (73 aa)).

It belongs to the RNA polymerase alpha chain family. As to quaternary structure, in cyanobacteria the RNAP catalytic core is composed of 2 alpha, 1 beta, 1 beta', 1 gamma and 1 omega subunit. When a sigma factor is associated with the core the holoenzyme is formed, which can initiate transcription.

The catalysed reaction is RNA(n) + a ribonucleoside 5'-triphosphate = RNA(n+1) + diphosphate. Its function is as follows. DNA-dependent RNA polymerase catalyzes the transcription of DNA into RNA using the four ribonucleoside triphosphates as substrates. This is DNA-directed RNA polymerase subunit alpha from Prochlorococcus marinus (strain MIT 9312).